The following is a 1186-amino-acid chain: MEQEDQQYEEDSSQFNKNNYVPDDNSGEKEQPATTTEITTTTTTTTPTAIDNNDSDLTEDVINAVSKYKDGTSSKSVKKTRRKFAMNIATDEVFNLPPMEQQQQQQHLQPPLSPNSASNTNFGAAATFSPTSILSKNNKIITSQQTSSTSISPLKPSPLSFSSGILPPSSRIYESPPTLGKYDKVILVILSQQYLQNQVNIFPIKLIDRERINLIHQNILSNEFQLLKSLKHSGIVNYIGMINDNTGFGIVQEFYENGSLSDIYNRSGAFQESLVAKYTLQILEALGYIHSQGIVHRNLKSNNVLLAKGGKVKISDFAIGIRSSAIEPSIRFSLNGYPFWTSPEVLSMKPFNHKVDSWSIGCLIMELIVGHPPFSHLGPMEALIEIINPSTTILPNCLDENEQSLFSLELNQFLELCFKKEPSDRASVHDLLRHPWLSMFNDSSSSSSSSSSQAHPTVQSNNLNGNVNSRTHGEFYSLDFLSQFEQNEKEISKILSSGDQLDSTSNQIDLKKFQFKHYNKKQQQQYNYNYNNYNNNNNNNNNTNDNDNECGEQTEEINLSSLSKDEQIERLKAIIDQNETMANNLKYTMQEVLQEQTKYYEICESMKSKTLEILNQNKTGARISAHSNSLLKRTNQMANDLGRKYEILQSNIKRLEDYLITKDDCAKKLANVVYRNKISFDSLLNPTLAANLLYQIGSKTWKKGQEKRAFATLKDNFLFFFKNEKSSYPIDVIYLNDKRNISITSIQDSKKKAYIICIGTTIHDQNNLDPSNNNESVNLSTSPGSLVNSNSNPSISNSLNNNNNNNNNNNNNNNGNPNVIITTNNNCNSNSNGNNIATPPISIPNGKEVKEGKEIKEIKEPKEKDKDKEKDKDKEKDKDKEKDKDKEKEKDKDKENNNNNNSNNNNNNGNNYNSSETIWCLLAFDNSKNMENWYGVLDSVVPWYDKRAYEISKPMLPIENKKHQKQKSLDSTNKQSPGSLGGAGGDVSWKKESGGIKFQGVVGVRLDDLMTRESPTAELPYFLSKMLKFLEKNVDEEGILRLSGSSTEILEMKQQLQRGESIDYTYKDPHAVTGLLKLFLRELPESILPEHLRIQSTEILSNGRFGEKEKIKEIQTLLSNLSRPHYNVLKHMLFFAKLVVDRSEYNKMVIANVTTCFSPTLRIPPGLFNFLINTYDLSFPKFNLSV.

The segment covering 1 to 12 (MEQEDQQYEEDS) has biased composition (acidic residues). 2 disordered regions span residues 1-55 (MEQE…NNDS) and 99-122 (MEQQQQQQHLQPPLSPNSASNTNF). Composition is skewed to low complexity over residues 34–48 (TTTEITTTTTTTTPT) and 99–110 (MEQQQQQQHLQP). One can recognise a Protein kinase domain in the interval 173–437 (YESPPTLGKY…VHDLLRHPWL (265 aa)). Residues 179–187 (LGKYDKVIL) and Lys205 contribute to the ATP site. Disordered regions lie at residues 447–468 (SSSSSSQAHPTVQSNNLNGNVN) and 530–551 (YNNYNNNNNNNNNTNDNDNECG). The span at 453–468 (QAHPTVQSNNLNGNVN) shows a compositional bias: polar residues. A compositionally biased stretch (low complexity) spans 530–545 (YNNYNNNNNNNNNTND). The stretch at 631–659 (LKRTNQMANDLGRKYEILQSNIKRLEDYL) forms a coiled coil. Over residues 766 to 784 (NNLDPSNNNESVNLSTSPG) the composition is skewed to polar residues. Disordered regions lie at residues 766–911 (NNLD…NGNN) and 959–988 (ENKKHQKQKSLDSTNKQSPGSLGGAGGDVS). The span at 785–836 (SLVNSNSNPSISNSLNNNNNNNNNNNNNNNGNPNVIITTNNNCNSNSNGNNI) shows a compositional bias: low complexity. Residues 847–896 (KEVKEGKEIKEIKEPKEKDKDKEKDKDKEKDKDKEKDKDKEKEKDKDKEN) are compositionally biased toward basic and acidic residues. The stretch at 875-909 (EKDKDKEKDKDKEKEKDKDKENNNNNNSNNNNNNG) forms a coiled coil. Positions 897–911 (NNNNNSNNNNNNGNN) are enriched in low complexity. A compositionally biased stretch (polar residues) spans 969–978 (LDSTNKQSPG). In terms of domain architecture, Rho-GAP spans 1004 to 1186 (VRLDDLMTRE…LSFPKFNLSV (183 aa)).

Belongs to the protein kinase superfamily. STE Ser/Thr protein kinase family.

In Dictyostelium discoideum (Social amoeba), this protein is Probable inactive serine/threonine-protein kinase DDB_G0293184.